The chain runs to 248 residues: Ribosomal RNA small subunit methyltransferase J (248 aa).

Residues 101–102, 117–118, 153–154, and Asp-171 contribute to the S-adenosyl-L-methionine site; these read RD, ER, and SS.

The protein belongs to the methyltransferase superfamily. RsmJ family.

The protein localises to the cytoplasm. The enzyme catalyses guanosine(1516) in 16S rRNA + S-adenosyl-L-methionine = N(2)-methylguanosine(1516) in 16S rRNA + S-adenosyl-L-homocysteine + H(+). Its function is as follows. Specifically methylates the guanosine in position 1516 of 16S rRNA. In Serratia proteamaculans (strain 568), this protein is Ribosomal RNA small subunit methyltransferase J.